We begin with the raw amino-acid sequence, 936 residues long: Myocardin-related transcription factor A (936 aa).

RPEL repeat units follow at residues 15-40, 59-84, and 103-128; these read TVLQ…PPLK, DYLK…EETS, and DDLN…PVET. Residues 62 to 100 carry the Bipartite Nuclear localization signal motif; that stretch reads KRKIRSRPERAELVRMHILEETSAEPSLQAKQIKLKRAR. Disordered regions lie at residues 146 to 185, 234 to 258, and 401 to 422; these read SSFD…TQIP, SQPK…KVKK, and SQDP…QAKP. Polar residues predominate over residues 160 to 170; the sequence is QPASQESQGSI. Residues 239-254 are compositionally biased toward basic and acidic residues; it reads SFEKSQRIKKPKEPKP. One can recognise an SAP domain in the interval 368-402; the sequence is LDEMKVAELKLELKHRGLPVSGTKIDLIERLKASQ. Over residues 404-416 the composition is skewed to low complexity; the sequence is PSTATAASAKPTP. Positions 497 to 542 form a coiled coil; the sequence is DARDKDLMLREKDRQIEELTQRLKQKQELVERLRQQLEQEKRTPQH. The segment at 707-755 is disordered; the sequence is HNESPATPPQQPEPEPPPHSIFLTHSSPQWSKNPPGYDEAMKQQPNSCE. Pro residues predominate over residues 712 to 725; that stretch reads ATPPQQPEPEPPPH. Residues 729–738 show a composition bias toward polar residues; sequence LTHSSPQWSK.

Interacts with srf, forming the srf-mrtfa nuclear complex which binds the 5'-CArG-3' consensus motif (CArG box) on DNA via srf. Interacts (via RPEL repeats) with globular actin (G-actin), thereby regulating its subcellular location and activity of the complex formed with srf.

The protein localises to the cytoplasm. The protein resides in the nucleus. Its function is as follows. Transcription coactivator that associates with the serum response factor (srf) transcription factor to control expression of genes regulating the cytoskeleton during development, morphogenesis and cell migration. The srf-mrtfa complex activity responds to Rho GTPase-induced changes in cellular globular actin (G-actin) concentration, thereby coupling cytoskeletal gene expression to cytoskeletal dynamics. Mrtfa binds G-actin via its RPEL repeats, regulating activity of the mrtfa-srf complex. Activity is also regulated by filamentous actin (F-actin) in the nucleus. The chain is Myocardin-related transcription factor A (mrtfa) from Xenopus laevis (African clawed frog).